A 377-amino-acid chain; its full sequence is Opsin-1 (377 aa).

The Extracellular segment spans residues 1 to 58 (MDPGPGLAALQAWAAKSPAYGAANQTVVDKVPPDMMHMIDPHWYQFPPMNPLWHALLG). The N-linked (GlcNAc...) asparagine glycan is linked to Asn-24. The chain crosses the membrane as a helical span at residues 59–79 (FTIGVLGFVSISGNGMVIYIF). The Cytoplasmic segment spans residues 80–92 (MSTKSLKTPSNLL). Residues 93–113 (VVNLAFSDFLMMCAMSPAMVV) traverse the membrane as a helical segment. At 114–129 (NCYYETWVWGPFACEL) the chain is on the extracellular side. A disulfide bridge links Cys-127 with Cys-204. A helical membrane pass occupies residues 130–150 (YACAGSLFGCASIWTMTMIAF). Topologically, residues 151–169 (DRYNVIVKGIAAKPMTSNG) are cytoplasmic. A helical membrane pass occupies residues 170–190 (ALLRILGIWVFSLAWTLLPFF). The Extracellular portion of the chain corresponds to 191–220 (GWNRYVPEGNMTACGTDYLSKSWVSRSYIL). Asn-200 carries N-linked (GlcNAc...) asparagine glycosylation. Residues 221–241 (IYSVFVYFLPLLLIIYSYFFI) form a helical membrane-spanning segment. Over 242–280 (VQAVAAHEKAMREQAKKMNVASLRSSEAANTSAECKLAK) the chain is Cytoplasmic. Residues 281 to 301 (VALMTISLWFMAWTPYLVINY) traverse the membrane as a helical segment. The Extracellular segment spans residues 302–312 (TGVFESAPISP). The chain crosses the membrane as a helical span at residues 313 to 335 (LATIWGSLFAKANAVYNPIVYGI). Over 336–377 (SHPKYQAALYAKFPSLQCQSAPEDAGSVASGTTAVSEEKPAA) the chain is Cytoplasmic. Residues 357–377 (PEDAGSVASGTTAVSEEKPAA) form a disordered region.

It belongs to the G-protein coupled receptor 1 family. Opsin subfamily. In terms of tissue distribution, in the retina, expression is abundant and uniform in the anterior-posterior and oblique cells of the retinulae, with some expression in the proximal cells. There is no expression in the dorsal rim retinulae (at protein level).

It localises to the cell projection. Its subcellular location is the rhabdomere membrane. In terms of biological role, visual pigments are the light-absorbing molecules that mediate vision. They consist of an apoprotein, opsin, covalently linked to cis-retinal. May play a role in photoperiodic photoreception. This chain is Opsin-1 (OP1), found in Manduca sexta (Tobacco hawkmoth).